Here is a 305-residue protein sequence, read N- to C-terminus: DNA-directed RNA polymerase 35 kDa subunit (305 aa).

The protein belongs to the poxviridae DNA-directed RNA polymerase 35 kDa subunit family. As to quaternary structure, the DNA-dependent RNA polymerase used for intermediate and late genes expression consists of eight subunits 147 kDa, 133 kDa, 35 kDa, 30 kDa, 22 kDa, 19 kDa, 18 kDa and 7 kDa totalling more than 500 kDa in mass. The same holoenzyme, with the addition of the transcription-specificity factor RAP94, is used for early gene expression.

The protein localises to the virion. It catalyses the reaction RNA(n) + a ribonucleoside 5'-triphosphate = RNA(n+1) + diphosphate. Functionally, part of the DNA-dependent RNA polymerase which catalyzes the transcription of viral DNA into RNA using the four ribonucleoside triphosphates as substrates. Responsible for the transcription of early, intermediate and late genes. DNA-dependent RNA polymerase associates with the early transcription factor (ETF), itself composed of D6 and A7, thereby allowing the early genes transcription. Late transcription, and probably also intermediate transcription, require newly synthesized RNA polymerase. This Variola virus (isolate Human/India/Ind3/1967) (VARV) protein is DNA-directed RNA polymerase 35 kDa subunit (OPG156).